Here is a 397-residue protein sequence, read N- to C-terminus: Na(+)/H(+) antiporter NhaA 1 (397 aa).

Helical transmembrane passes span phenylalanine 15–isoleucine 35, tyrosine 42–alanine 62, leucine 65–valine 85, isoleucine 101–isoleucine 121, valine 129–leucine 149, leucine 160–phenylalanine 180, glycine 183–methionine 203, leucine 219–phenylalanine 241, tryptophan 265–glycine 285, isoleucine 299–valine 319, isoleucine 335–leucine 355, and methionine 370–alanine 390.

It belongs to the NhaA Na(+)/H(+) (TC 2.A.33) antiporter family.

The protein localises to the cell inner membrane. The catalysed reaction is Na(+)(in) + 2 H(+)(out) = Na(+)(out) + 2 H(+)(in). Functionally, na(+)/H(+) antiporter that extrudes sodium in exchange for external protons. The chain is Na(+)/H(+) antiporter NhaA 1 from Pseudomonas putida (strain ATCC 47054 / DSM 6125 / CFBP 8728 / NCIMB 11950 / KT2440).